A 101-amino-acid chain; its full sequence is Small ribosomal subunit protein uS14 (101 aa).

It belongs to the universal ribosomal protein uS14 family. As to quaternary structure, part of the 30S ribosomal subunit. Contacts proteins S3 and S10.

Binds 16S rRNA, required for the assembly of 30S particles and may also be responsible for determining the conformation of the 16S rRNA at the A site. This Ruegeria pomeroyi (strain ATCC 700808 / DSM 15171 / DSS-3) (Silicibacter pomeroyi) protein is Small ribosomal subunit protein uS14.